The following is a 991-amino-acid chain: Toll-like receptor 13 (991 aa).

The signal sequence occupies residues 1-68 (MSGLYRILVQ…GFSLPPVAET (68 aa)). At 69–783 (YGFNKCTQYE…DAMCNFDLGK (715 aa)) the chain is on the extracellular side. Asparagine 93, asparagine 109, and asparagine 125 each carry an N-linked (GlcNAc...) asparagine glycan. 25 LRR repeats span residues 104–125 (YTTHLNLTHNEIQVLPPWSFTN), 128–149 (ALVDLRLEWNSIWKIDEGAFRG), 152–174 (NLTLLNLVENKIQSVNNSFEGLS), 175–196 (SLKTLLLSHNQITHIHKDAFTP), 199–220 (KLKYLSLSRNNISDFSGILEAV), 225–246 (CLERLDLTNNSIMYLDHSPRSL), 248–268 (SLTHLSFEGNKLRELNFSALS), 271–292 (NLTNLSASRNGNKVIQNVYLKT), 295–315 (QLKSLNLSGTVIKLENLSAKH), 318–338 (NLRAMDLSNWELRHGHLDMKT), 348–368 (KLETLVFQKNVTNAEGIKQLA), 372–394 (RLLFLDLGQNSDLIYLNDSEFNA), 397–418 (SLQKLNLNKCQLSFINNRTWSS), 421–442 (NLTSLDLSHNKFKSFPDFAFSP), 445–466 (HLEFLSLSRNPITELNNLAFSG), 469–490 (ALKELNLAACWIVTIDRYSFTQ), 493–514 (NLEVLDLGDNNIRTLNHGTFRP), 517–538 (KLQSLILSHNCLKILEPNSFSG), 541–562 (NLRSLDLMYNSLSYFHEHLFSG), 565–585 (KLLILKLGFNKITYETTRTLQ), 594–617 (SLKQLNLEGQRHGIQVVPSNFFQG), 620–641 (SLQELLLGKNPSVFLDHHQFDP), 644–665 (NLTKLDISGTKDGDRSLYLNAS), 672–693 (RLKILRLENNNLESLVPDMFSS), and 696–716 (SLQVFSLRFNNLKVINQSHLK). 2 N-linked (GlcNAc...) asparagine glycosylation sites follow: asparagine 152 and asparagine 167. N-linked (GlcNAc...) asparagine glycosylation is found at asparagine 209, asparagine 233, asparagine 263, asparagine 271, asparagine 274, asparagine 300, and asparagine 310. N-linked (GlcNAc...) asparagine glycans are attached at residues asparagine 357, asparagine 388, asparagine 413, and asparagine 421. N-linked (GlcNAc...) asparagine glycans are attached at residues asparagine 644 and asparagine 663. Residues asparagine 711 and asparagine 742 are each glycosylated (N-linked (GlcNAc...) asparagine). An LRRCT domain is found at 729 to 779 (NKLQCTCDNLWFKNWSMNTEEVHIPFLRSYPCQQPGSQSLLIDFDDAMCNF). The helical transmembrane segment at 784–804 (VYFLCSFSMVLSTMVFSWFST) threads the bilayer. The Cytoplasmic segment spans residues 805–991 (KMIASLWYGL…KENTHLIVVE (187 aa)). In terms of domain architecture, TIR spans 832-975 (FLYDAFVSFS…LFWARIRNAL (144 aa)).

Belongs to the Toll-like receptor family. In terms of assembly, binds MYD88 via their respective TIR domains. Interacts with UNC93B1.

Its subcellular location is the endosome membrane. In terms of biological role, component of innate and adaptive immunity that recognizes and binds 23S rRNA from bacteria. TLRs (Toll-like receptors) control host immune response against pathogens through recognition of molecular patterns specific to microorganisms. Acts via MYD88 and TRAF6, leading to NF-kappa-B activation, cytokine secretion and the inflammatory response. Specifically binds the 5'-CGGAAAGACC-3' sequence on bacterial 23S rRNA, a sequence also bound by MLS group antibiotics (including erythromycin). May also recognize vesicular stomatitis virus; however, these data require additional evidences. In Mus musculus (Mouse), this protein is Toll-like receptor 13 (Tlr13).